The following is a 329-amino-acid chain: Chlorophyllase-1, chloroplastic (329 aa).

A chloroplast-targeting transit peptide spans 1-21 (MAAMVDAKPAASVQGTPLLAT). Positions 145–149 (GHSRG) match the GXSXG motif. The active-site Nucleophile is the Ser147. Residues Asp169 and His242 each act as charge relay system in the active site.

This sequence belongs to the AB hydrolase superfamily. Lipase family.

The protein localises to the plastid. Its subcellular location is the chloroplast. The catalysed reaction is a chlorophyll + H2O = a chlorophyllide + phytol + H(+). It participates in porphyrin-containing compound metabolism; chlorophyll degradation. Functionally, catalyzes the hydrolysis of ester bond in chlorophyll to yield chlorophyllide and phytol. The protein is Chlorophyllase-1, chloroplastic (CHLASE1) of Citrus sinensis (Sweet orange).